We begin with the raw amino-acid sequence, 244 residues long: Small ribosomal subunit protein uS2 (244 aa).

This sequence belongs to the universal ribosomal protein uS2 family.

The chain is Small ribosomal subunit protein uS2 from Exiguobacterium sibiricum (strain DSM 17290 / CCUG 55495 / CIP 109462 / JCM 13490 / 255-15).